A 328-amino-acid chain; its full sequence is Probable voltage-gated potassium channel subunit beta (328 aa).

W21, Q27, and D49 together coordinate NADP(+). Y54 (proton donor/acceptor) is an active-site residue. NADP(+)-binding residues include S152, Q178, W207, S208, P209, L210, A211, K218, R229, G285, T287, Q291, E294, and N295.

This sequence belongs to the shaker potassium channel beta subunit family. In terms of assembly, forms heteromultimeric complexes with potassium channel alpha subunits. Expressed in late-developed leaves with the highest expression in the flag leaf (at protein level).

In terms of biological role, probable accessory potassium channel protein which modulates the activity of the pore-forming alpha subunit. This is Probable voltage-gated potassium channel subunit beta (KOB1) from Oryza sativa subsp. japonica (Rice).